We begin with the raw amino-acid sequence, 201 residues long: Small ribosomal subunit protein uS4c (201 aa).

A disordered region spans residues 15–43 (LGALPGLTSKRPTPGSDLRNQSRSGKRSQ). Positions 89 to 149 (MRLDNILFRL…DEQKSRALIQ (61 aa)) constitute an S4 RNA-binding domain.

It belongs to the universal ribosomal protein uS4 family. Part of the 30S ribosomal subunit. Contacts protein S5. The interaction surface between S4 and S5 is involved in control of translational fidelity.

It is found in the plastid. The protein localises to the chloroplast. One of the primary rRNA binding proteins, it binds directly to 16S rRNA where it nucleates assembly of the body of the 30S subunit. In terms of biological role, with S5 and S12 plays an important role in translational accuracy. This Nandina domestica (Heavenly bamboo) protein is Small ribosomal subunit protein uS4c (rps4).